A 475-amino-acid chain; its full sequence is Proton-coupled amino acid transporter 1 (475 aa).

The segment covering 1-15 has biased composition (basic and acidic residues); it reads MSTQRLRNEDYHDYS. Positions 1–32 are disordered; the sequence is MSTQRLRNEDYHDYSSTDVSPEESPSEGLGSF. Residues 1 to 50 are Cytoplasmic-facing; it reads MSTQRLRNEDYHDYSSTDVSPEESPSEGLGSFSPGSYQRLGENSSMTWFQ. The chain crosses the membrane as a helical span at residues 51–71; sequence TLIHLLKGNIGTGLLGLPLAV. The Extracellular portion of the chain corresponds to 72-77; sequence KNAGLL. Residues 78–98 form a helical membrane-spanning segment; sequence LGPLSLLVIGIVAVHCMGILV. The Cytoplasmic portion of the chain corresponds to 99-140; it reads KCAHHLCRRLNKPFLDYGDTVMYGLECSPSTWIRNHSHWGRR. The chain crosses the membrane as a helical span at residues 141-161; sequence IVDFFLVVTQLGFCCVYFVFL. Residues 162 to 189 lie on the Extracellular side of the membrane; that stretch reads ADNFKQVIEAANGTTTNCNNNETVILTP. N-linked (GlcNAc...) asparagine glycosylation is found at N173 and N182. A disulfide bridge links C179 with C328. A helical membrane pass occupies residues 190–210; that stretch reads TMDSRLYMLTFLPFLVLLSFI. Topologically, residues 211-214 are cytoplasmic; that stretch reads RNLR. A helical membrane pass occupies residues 215 to 235; the sequence is ILSIFSLLANISMFVSLIMIY. At 236–256 the chain is on the extracellular side; the sequence is QFIVQRIPDPSHLPLVAPWKT. The helical transmembrane segment at 257–277 threads the bilayer; the sequence is YPLFFGTAIFAFEGIGVVLPL. At 278–288 the chain is on the cytoplasmic side; sequence ENKMKDSQKFP. A helical transmembrane segment spans residues 289-309; sequence LILYLGMAIITVLYISLGSLG. Over 310-341 the chain is Extracellular; sequence YLQFGADIKGSITLNLPNCWLYQSVKLLYSIG. Residues 342 to 362 traverse the membrane as a helical segment; it reads IFFTYALQFYVAAEIIIPAIV. Over 363–371 the chain is Cytoplasmic; that stretch reads SRVPERFEL. A helical membrane pass occupies residues 372–392; the sequence is VVDLSARTAMVCVTCVLAVLI. At 393 to 396 the chain is on the extracellular side; sequence PRLD. A helical transmembrane segment spans residues 397-417; sequence LVISLVGSVSSSALALIIPPL. Topologically, residues 418–438 are cytoplasmic; it reads LEVTTYYGEGISPLTITKDAL. Residues 439 to 459 traverse the membrane as a helical segment; that stretch reads ISILGFVGFVVGTYESLWELI. At 460–475 the chain is on the extracellular side; sequence QPSHSDSSTNSTSAFI. N469 carries N-linked (GlcNAc...) asparagine glycosylation.

It belongs to the amino acid/polyamine transporter 2 family. In terms of tissue distribution, widely expressed and predominantly expressed in brain. Within the brain, expression restricted to neurons and not detected in glial cells. Abundant in regions rich in neurons using glutamate and GABA such as Purkinje cells in the cerebellum and pyramidal cells in the hippocampus.

It is found in the cell membrane. Its subcellular location is the apical cell membrane. It localises to the lysosome membrane. The catalysed reaction is glycine(in) + H(+)(in) = glycine(out) + H(+)(out). The enzyme catalyses L-proline(out) + H(+)(out) = L-proline(in) + H(+)(in). It catalyses the reaction D-proline(out) + H(+)(out) = D-proline(in) + H(+)(in). It carries out the reaction L-alanine(in) + H(+)(in) = L-alanine(out) + H(+)(out). The catalysed reaction is D-alanine(in) + H(+)(in) = D-alanine(out) + H(+)(out). The enzyme catalyses L-serine(in) + H(+)(in) = L-serine(out) + H(+)(out). It catalyses the reaction D-serine(out) + H(+)(out) = D-serine(in) + H(+)(in). It carries out the reaction 4-aminobutanoate(in) + H(+)(in) = 4-aminobutanoate(out) + H(+)(out). The catalysed reaction is beta-alanine(in) + H(+)(in) = beta-alanine(out) + H(+)(out). In terms of biological role, electrogenic proton/amino acid symporter with selectivity for small apolar L-amino acids, their D-enantiomers and selected amino acid derivatives such as 4-aminobutanoate/GABA. May be involved in the efflux from the lysosomal compartment of neutral amino acids resulting from proteolysis. May play a role in specifying sites for exocytosis in neurons. The chain is Proton-coupled amino acid transporter 1 from Rattus norvegicus (Rat).